We begin with the raw amino-acid sequence, 508 residues long: T-complex protein 1 subunit beta (508 aa).

The protein belongs to the TCP-1 chaperonin family. In terms of assembly, component of the T-complex protein 1 (TCP1) complex.

The protein localises to the cytoplasm. Molecular chaperone; assists the folding of proteins upon ATP hydrolysis. This Encephalitozoon cuniculi (strain GB-M1) (Microsporidian parasite) protein is T-complex protein 1 subunit beta (CCT2).